The following is a 1226-amino-acid chain: E3 ubiquitin-protein ligase mind-bomb (1226 aa).

Residues 1–12 (MSCAATLSSAKD) show a composition bias toward polar residues. Disordered regions lie at residues 1–42 (MSCA…NTNT) and 66–87 (GGGGSLPGGTTSSSSASAAGGV). Over residues 19–30 (SGGGGGGGGGGA) the composition is skewed to gly residues. Low complexity-rich tracts occupy residues 31 to 42 (PTNSNTNTNTNT) and 73 to 86 (GGTTSSSSASAAGG). An MIB/HERC2 1 domain is found at 100–168 (VRRFSMEGVG…AYDLRILDSA (69 aa)). The segment at 174 to 226 (HEGTMCDTCRQQPIFGIRWKCAECINYDLCSICYHGDKHHLRHRFYRITTPGG) adopts a ZZ-type zinc-finger fold. Zn(2+)-binding residues include cysteine 179, cysteine 182, cysteine 194, cysteine 197, cysteine 203, cysteine 206, histidine 212, and histidine 216. Residues 237–315 (SKKVLARGIF…MADLKVVNDA (79 aa)) enclose the MIB/HERC2 2 domain. ANK repeat units lie at residues 567 to 596 (AGHTALQAASQNGHIEVIQVLLRHAVDVEI), 600 to 629 (DGDRAVHHAAFGDEAAVIEILAKAGADLNA), 633 to 662 (RRQTSLHIAVNKGHLNVVKTLLTLGCHPSL), 666 to 695 (EGDTPLHDAISKEHDEMLSLLLDFGADITL), 699 to 731 (NGFNALHHAALKGNPSAMKILLTKTNRPWIVEE), 735 to 765 (DGYTALHLAALNNHVEIAELLVHMGKANMDR), 769 to 798 (NLQTALHLAVERQHVQIVKLLVQDGADLNI), and 802 to 833 (DGDTPLHEALRHHTLSQLKQLQDVEGFGKLLM). Residues 890 to 919 (TDDSELPGNVAGTSSSARARAASGSLNQSS) are disordered. Over residues 900–914 (AGTSSSARARAASGS) the composition is skewed to low complexity. RING-type zinc fingers lie at residues 970 to 1005 (CLVCSDAKRDTVFKPCGHVSCCETCAPRVKKCLICR) and 1017 to 1052 (CLVCSDRRAAVFFRPCGHMVACEHCSALMKKCVLCR). The stretch at 1159–1181 (VNNFQMDDVQKLKQQLQDIKEQT) forms a coiled coil. The RING-type 3 zinc finger occupies 1183-1216 (CPVCFDRIKNMVFLCGHGTCQMCGDQIEGCPICR).

In terms of assembly, interacts with intracellular domain of Dl and Ser. In terms of tissue distribution, ubiquitous in the wing imaginal disk (at protein level).

It localises to the cytoplasm. The protein localises to the cell cortex. It catalyses the reaction S-ubiquitinyl-[E2 ubiquitin-conjugating enzyme]-L-cysteine + [acceptor protein]-L-lysine = [E2 ubiquitin-conjugating enzyme]-L-cysteine + N(6)-ubiquitinyl-[acceptor protein]-L-lysine.. It functions in the pathway protein modification; protein ubiquitination. Its function is as follows. E3 ubiquitin-protein ligase that mediates ubiquitination of Delta (Dl) and Serrate (Ser) receptors, which act as ligands of Notch proteins. Positively regulates the Notch signaling by ubiquitinating the intracellular domain of Dl and Ser, leading to endocytosis of Dl and Ser receptors. Regulates a subset of Notch signaling events, including wing margin specification, leg segmentation and vein determination, that are distinct from those events requiring neuralize (neur) activity. Also modulates lateral inhibition, a neur- and Dl-dependent signaling event, suggesting a distinct but partially complementary function with neur. In Drosophila melanogaster (Fruit fly), this protein is E3 ubiquitin-protein ligase mind-bomb (mib1).